Reading from the N-terminus, the 75-residue chain is DNA-directed RNA polymerase subunit omega (75 aa).

This sequence belongs to the RNA polymerase subunit omega family. In cyanobacteria the RNAP catalytic core is composed of 2 alpha, 1 beta, 1 beta', 1 gamma and 1 omega subunit. When a sigma factor is associated with the core the holoenzyme is formed, which can initiate transcription.

It catalyses the reaction RNA(n) + a ribonucleoside 5'-triphosphate = RNA(n+1) + diphosphate. Promotes RNA polymerase assembly. Latches the N- and C-terminal regions of the beta' subunit thereby facilitating its interaction with the beta and alpha subunits. The polypeptide is DNA-directed RNA polymerase subunit omega (Prochlorococcus marinus (strain MIT 9211)).